The sequence spans 149 residues: Endoribonuclease YbeY (149 aa).

3 residues coordinate Zn(2+): H115, H119, and H125.

This sequence belongs to the endoribonuclease YbeY family. The cofactor is Zn(2+).

It localises to the cytoplasm. In terms of biological role, single strand-specific metallo-endoribonuclease involved in late-stage 70S ribosome quality control and in maturation of the 3' terminus of the 16S rRNA. The chain is Endoribonuclease YbeY from Mycoplasmopsis pulmonis (strain UAB CTIP) (Mycoplasma pulmonis).